The sequence spans 474 residues: Immunoglobulin heavy constant mu (474 aa).

The segment at 1–105 is CH1; sequence GSASAPTLFP…NKEKNVPLPV (105 aa). The Extracellular segment spans residues 1 to 450; the sequence is GSASAPTLFP…EEGFENLWAT (450 aa). Ig-like domains lie at 6–102, 111–211, 229–319, and 329–430; these read PTLF…KNVP, PKVS…QNAS, PSFA…QTIS, and PDVY…RTVD. 2 disulfide bridges follow: cysteine 28–cysteine 88 and cysteine 134–cysteine 197. The N-linked (GlcNAc...) (complex) asparagine glycan is linked to asparagine 46. Residues 106 to 217 are CH2; it reads IAELPPKVSV…QNASSMCVPD (112 aa). N-linked (GlcNAc...) (complex) asparagine glycosylation occurs at asparagine 209. The CH3 stretch occupies residues 218–323; that stretch reads QDTAIRVFAI…LKQTISRPKG (106 aa). Disulfide bonds link cysteine 244–cysteine 303 and cysteine 351–cysteine 413. 2 N-linked (GlcNAc...) asparagine glycosylation sites follow: asparagine 272 and asparagine 279. The segment at 324–452 is CH4; the sequence is VALHRPDVYL…GFENLWATAS (129 aa). The important for IgM oligomerization stretch occupies residues 437 to 453; sequence VSADEEGFENLWATAST. A glycan (N-linked (GlcNAc...) asparagine) is linked at aspartate 440. A helical membrane pass occupies residues 451-471; it reads ASTFIVLFLLSLFYSTTVTLF. Over 472–474 the chain is Cytoplasmic; sequence KVK.

In terms of assembly, the basic structural unit of both sIgM and mIgM molecules consists of two identical heavy chains and two identical light chains; disulfide-linked. N-terminal variable regions of the heavy and light chains form the antigen binding sites, whereas the C-terminal constant regions of the heavy chains interact with immune receptors to mediate effector functions. As to quaternary structure, part of IgM antibody. Forms high order oligomers, homopentamers stabilized by the JCHAIN and homohexamers that lack JCHAIN. The oligomerization amplifies an inherently low affinity of IgM antibodies for the antigen by multi-point attachment (avidity). Adjacent IgM protomers associate via interchain disulfide links to form an asymmetric pentameric structure with a 50 degree gap. A single copy of JCHAIN is covalently linked to the first and the fifth IgM monomers via interchain disulfide bonds thus closing the pentamer ring. Only JCHAIN-containing IgM binds PIGR secretory component (via D1-CDR1 region); this interaction is a prerequisite for IgM transcytosis across mucosal epithelium. Pentameric sIgM interacts (via CH4 domain) with FCRM (via Ig-like domain); the interaction is glycan-independent and multivalent theoretically involving up to eight binding sites for the IgM pentamer. Interacts with FCAMR; this interaction facilitates the endocytosis of IgM-coated microbes or IgM-antigen immune complexes. Antigen-bound IgM (via the Fc region) binds to globular domains of C1q component of the complement system, all three modules C1QA, C1QB and C1QC being involved in IgM binding; this interaction is multivalent. Pentameric sIgM (via Fc region) interacts with CD5L (via SRCR2) through interchain disulfide-linkages; this interaction protects CD5L from renal excretion and provides for high levels of CD5L in circulation. Part of IgM B cell receptor complex on pre-B cells, immature and mature B cells. The BCR complex consists of one membrane-bound IgM molecule responsible for antigen binding, non-covalently associated with CD79A and CD79B signaling chains. In terms of processing, N-glycosylated; important for IgM secretion and its localization at the plasma membrane. The interaction with FCMR is glycan-independent.

It localises to the secreted. Its subcellular location is the cell membrane. Constant region of immunoglobulin heavy chains. Immunoglobulins, also known as antibodies, are membrane-bound or secreted glycoproteins produced by B lymphocytes. In the recognition phase of humoral immunity, the membrane-bound immunoglobulins serve as receptors which, upon binding of a specific antigen, trigger the clonal expansion and differentiation of B lymphocytes into immunoglobulins-secreting plasma cells. Secreted immunoglobulins mediate the effector phase of humoral immunity, which results in the elimination of bound antigens. The antigen binding site is formed by the variable domain of one heavy chain, together with that of its associated light chain. Thus, each immunoglobulin has two antigen binding sites with remarkable affinity for a particular antigen. The variable domains are assembled by a process called V-(D)-J rearrangement and can then be subjected to somatic hypermutations which, after exposure to antigen and selection, allow affinity maturation for a particular antigen. Functionally, constant region of secreted IgM (sIgM), also known as the Fc region of IgM antibody. Able to multimerize, forms high order polymers, mainly pentamers and occasionally hexamers, providing for multivalency and high avidity recognition of antigens. Natural sIgM are polyreactive and recognize conserved self- and pathogen-derived structures, whereas immune sIgM are secreted only upon exposure to pathogens and are antigen-specific. Both natural and immune sIgM are required for an efficient humoral immune response to infection. Mediates sIgM effector functions mostly via Fc receptors and the complement system. On lymphoid cells binds high-affinity Fc receptor FCMR and promotes induction of an efficient neutralizing IgG response while maintaining tolerance to self-antigens. Recruits C1q complement component to initiate the classical complement pathway, facilitating the recognition and neutralization of pathogens by the host. Together with C1q and mannose-binding lectin promotes the phagocytosis of apoptotic cells by macrophages, ensuring the clearance of potential autoimmune epitopes from tissues. Involved in mucosal immunity. It is transported by transcytosis across mucosal epithelium by PIGR and secreted on the apical side in complex with PIGR secretory component to scan mucosal lining for pathogens. IgM-antigen complexes undergo FCMR-mediated retrotranscytosis across mucosal M cells toward antigen-presenting cells in mucosal lymphoid tissues. Its function is as follows. Constant region of membrane-bound IgM, part of the B cell receptor complex (BCR). IgM BCR provides constitutive tonic signaling for B cell survival. Mediates pre-BCR signaling that regulates B cell selection and rearrangement of Ig genes via allelic exclusion. The polypeptide is Immunoglobulin heavy constant mu (Homo sapiens (Human)).